The primary structure comprises 515 residues: Bifunctional pantoate ligase/cytidylate kinase (515 aa).

The interval 1–279 is pantoate--beta-alanine ligase; the sequence is MKVVETVARL…VGSTRLIDNV (279 aa). 31–38 lines the ATP pocket; it reads MGALHEGH. Catalysis depends on H38, which acts as the Proton donor. Q62 provides a ligand contact to (R)-pantoate. Q62 provides a ligand contact to beta-alanine. 149 to 152 is a binding site for ATP; sequence GQKD. (R)-pantoate is bound at residue Q155. ATP-binding positions include V178 and 186-189; that span reads LSSR. Positions 280 to 515 are cytidylate kinase; sequence VLGQHHERRP…LYRDKVGGSV (236 aa).

It in the N-terminal section; belongs to the pantothenate synthetase family. In the C-terminal section; belongs to the cytidylate kinase family. Type 1 subfamily.

It is found in the cytoplasm. The catalysed reaction is (R)-pantoate + beta-alanine + ATP = (R)-pantothenate + AMP + diphosphate + H(+). The enzyme catalyses CMP + ATP = CDP + ADP. It catalyses the reaction dCMP + ATP = dCDP + ADP. It functions in the pathway cofactor biosynthesis; (R)-pantothenate biosynthesis; (R)-pantothenate from (R)-pantoate and beta-alanine: step 1/1. Its function is as follows. Catalyzes the condensation of pantoate with beta-alanine in an ATP-dependent reaction via a pantoyl-adenylate intermediate. Functionally, catalyzes the transfer of a phosphate group from ATP to either CMP or dCMP to form CDP or dCDP and ADP, respectively. The protein is Bifunctional pantoate ligase/cytidylate kinase of Gloeobacter violaceus (strain ATCC 29082 / PCC 7421).